Consider the following 113-residue polypeptide: Nucleoid-associated protein PMT_0025 (113 aa).

It belongs to the YbaB/EbfC family. Homodimer.

It localises to the cytoplasm. The protein resides in the nucleoid. In terms of biological role, binds to DNA and alters its conformation. May be involved in regulation of gene expression, nucleoid organization and DNA protection. The sequence is that of Nucleoid-associated protein PMT_0025 from Prochlorococcus marinus (strain MIT 9313).